The chain runs to 504 residues: Cytoplasmic dynein 1 light intermediate chain 1 (504 aa).

35 to 42 (GDPTSGKS) lines the ATP pocket. 3 stretches are compositionally biased toward low complexity: residues 167-189 (TTTAATTTTTTTSNNIENNTNKT), 392-425 (NSPSTPSPLSQSSNNNNSNNNINNTSTPSINTPL), and 437-446 (SSNNPVAASP). 3 disordered regions span residues 167 to 195 (TTTAATTTTTTTSNNIENNTNKTSPTTDK), 383 to 446 (LDND…AASP), and 464 to 504 (DKTS…QQKK). Basic and acidic residues predominate over residues 464-473 (DKTSSRKDLK). Residues 475 to 487 (SLASPPTTSVSSN) are compositionally biased toward polar residues. Positions 488–504 (AREDAKKELDKLKQQKK) are enriched in basic and acidic residues.

The protein belongs to the dynein light intermediate chain family. Homodimer. The cytoplasmic dynein 1 complex consists of two catalytic heavy chains (HCs) and a number of non-catalytic subunits presented by intermediate chains (ICs), light intermediate chains (LICs) and light chains (LCs).

Its subcellular location is the cytoplasm. It is found in the cytoskeleton. Its function is as follows. Acts as one of several non-catalytic accessory components of the cytoplasmic dynein 1 complex that are thought to be involved in linking dynein to cargos and to adapter proteins that regulate dynein function. Cytoplasmic dynein 1 acts as a motor for the intracellular retrograde motility of vesicles and organelles along microtubules. May play a role in binding dynein to membranous organelles or chromosomes. The polypeptide is Cytoplasmic dynein 1 light intermediate chain 1 (dync1li1) (Dictyostelium discoideum (Social amoeba)).